Here is a 354-residue protein sequence, read N- to C-terminus: UDP-glucose 4-epimerase 1 (354 aa).

An NAD(+)-binding site is contributed by Thr8 to Leu39. Ser133 contributes to the substrate binding site. Tyr157 acts as the Proton acceptor in catalysis.

This sequence belongs to the NAD(P)-dependent epimerase/dehydratase family. NAD(+) is required as a cofactor.

It carries out the reaction UDP-alpha-D-glucose = UDP-alpha-D-galactose. The protein operates within carbohydrate metabolism; galactose metabolism. Its function is as follows. Catalyzes the interconversion between UDP-glucose and UDP-galactose. In Oryza sativa subsp. japonica (Rice), this protein is UDP-glucose 4-epimerase 1 (UGE-1).